Here is a 270-residue protein sequence, read N- to C-terminus: tRNA pseudouridine synthase A (270 aa).

The active-site Nucleophile is Asp-60. The tract at residues 107-111 is RNA binding; it reads FHARF. Residue Tyr-118 participates in substrate binding. The interaction with tRNA stretch occupies residues 168–172; it reads QCQSR.

This sequence belongs to the tRNA pseudouridine synthase TruA family. In terms of assembly, homodimer.

It catalyses the reaction uridine(38/39/40) in tRNA = pseudouridine(38/39/40) in tRNA. Functionally, formation of pseudouridine at positions 38, 39 and 40 in the anticodon stem and loop of transfer RNAs. This Shigella boydii serotype 18 (strain CDC 3083-94 / BS512) protein is tRNA pseudouridine synthase A.